A 373-amino-acid polypeptide reads, in one-letter code: Phospho-N-acetylmuramoyl-pentapeptide-transferase (373 aa).

Helical transmembrane passes span 28–48 (LLTV…TIAY), 72–92 (TPTM…LCWA), 94–114 (LANP…AVGW), 135–155 (YFWL…IASQ), 177–197 (IVPL…YFVI), 212–232 (GLAI…SYVS), 252–272 (VTIV…YNAH), 276–296 (VFMG…IAVM), 301–321 (IAFA…ILQV), and 350–370 (QVVV…LMTL).

The protein belongs to the glycosyltransferase 4 family. MraY subfamily. Mg(2+) is required as a cofactor.

The protein resides in the cell inner membrane. It carries out the reaction UDP-N-acetyl-alpha-D-muramoyl-L-alanyl-gamma-D-glutamyl-meso-2,6-diaminopimeloyl-D-alanyl-D-alanine + di-trans,octa-cis-undecaprenyl phosphate = di-trans,octa-cis-undecaprenyl diphospho-N-acetyl-alpha-D-muramoyl-L-alanyl-D-glutamyl-meso-2,6-diaminopimeloyl-D-alanyl-D-alanine + UMP. The protein operates within cell wall biogenesis; peptidoglycan biosynthesis. In terms of biological role, catalyzes the initial step of the lipid cycle reactions in the biosynthesis of the cell wall peptidoglycan: transfers peptidoglycan precursor phospho-MurNAc-pentapeptide from UDP-MurNAc-pentapeptide onto the lipid carrier undecaprenyl phosphate, yielding undecaprenyl-pyrophosphoryl-MurNAc-pentapeptide, known as lipid I. The polypeptide is Phospho-N-acetylmuramoyl-pentapeptide-transferase (Psychrobacter sp. (strain PRwf-1)).